A 417-amino-acid chain; its full sequence is NADH-quinone oxidoreductase subunit D 1 (417 aa).

It belongs to the complex I 49 kDa subunit family. NDH-1 is composed of 14 different subunits. Subunits NuoB, C, D, E, F, and G constitute the peripheral sector of the complex.

It is found in the cell membrane. The catalysed reaction is a quinone + NADH + 5 H(+)(in) = a quinol + NAD(+) + 4 H(+)(out). NDH-1 shuttles electrons from NADH, via FMN and iron-sulfur (Fe-S) centers, to quinones in the respiratory chain. The immediate electron acceptor for the enzyme in this species is believed to be ubiquinone. Couples the redox reaction to proton translocation (for every two electrons transferred, four hydrogen ions are translocated across the cytoplasmic membrane), and thus conserves the redox energy in a proton gradient. This chain is NADH-quinone oxidoreductase subunit D 1, found in Roseiflexus castenholzii (strain DSM 13941 / HLO8).